The following is a 954-amino-acid chain: Glycine dehydrogenase (decarboxylating) (954 aa).

Lys704 carries the N6-(pyridoxal phosphate)lysine modification.

This sequence belongs to the GcvP family. In terms of assembly, the glycine cleavage system is composed of four proteins: P, T, L and H. Pyridoxal 5'-phosphate serves as cofactor.

It carries out the reaction N(6)-[(R)-lipoyl]-L-lysyl-[glycine-cleavage complex H protein] + glycine + H(+) = N(6)-[(R)-S(8)-aminomethyldihydrolipoyl]-L-lysyl-[glycine-cleavage complex H protein] + CO2. The glycine cleavage system catalyzes the degradation of glycine. The P protein binds the alpha-amino group of glycine through its pyridoxal phosphate cofactor; CO(2) is released and the remaining methylamine moiety is then transferred to the lipoamide cofactor of the H protein. In Vibrio vulnificus (strain YJ016), this protein is Glycine dehydrogenase (decarboxylating).